The primary structure comprises 89 residues: uncharacterized protein (89 aa).

This is an uncharacterized protein from Schizosaccharomyces pombe (strain 972 / ATCC 24843) (Fission yeast).